Reading from the N-terminus, the 157-residue chain is Protein Smg homolog (157 aa).

Belongs to the Smg family.

The protein is Protein Smg homolog of Shewanella loihica (strain ATCC BAA-1088 / PV-4).